The sequence spans 161 residues: Bacterial E2-like ubiquitin protein BilB (161 aa).

Cys-113 serves as the catalytic Glycyl thioester intermediate.

In terms of biological role, component of the Bil (bacterial ISG15-like) antiviral defense system, composed of BilA, BilB, BilC and BilD. The Bil system specifically conjugates a ubiquitin-like moiety (bilA) to the bacteriophage central tail fiber (CTF, or tip attachment protein J) via reactions involving E1 (bilD) and E2 (bilB). Modifies CTF of phage SECphi27 and SECphi4, which probably interferes with assembly of the phage tail. Also modifies T5 baseplate hub protein pb3 (gene D16), but not gp27 of phage T6 (Bil defends against T6). BilB probably accepts ubiquitin from the BilA-BilD (E1) complex and catalyzes its covalent attachment to target protein (CTF). Bil-encoding bacteria produce mostly defective phage SECphi27, many of which have phage assembly defects, including no tails. SECphi27 phage progeny produced in E.coli with the Bil system inject less DNA into naive host cells, maybe because the phage are less able to adsorb and inject their DNA into host cells. Expression of the Bil system in E.coli (strain MG1655) confers about 100-fold resistance to phage SECphi27, SECphi18, SECphi6, SECphi4 and T5, but not to SECphi17. When cells expressing the Bil system are infected by phage SECphi27 at low multiplicity of infection (0.03 MOI) the culture survives, at 3.0 MOI the culture collapses at the same time as cells without the Bil system. The sequence is that of Bacterial E2-like ubiquitin protein BilB from Collimonas sp. (strain OK412).